Consider the following 322-residue polypeptide: Ribose-phosphate pyrophosphokinase 1 (322 aa).

Residues 39 to 41 (DGE) and 98 to 99 (RQ) each bind ATP. Mg(2+) contacts are provided by histidine 132 and aspartate 173. The active site involves lysine 196. Residues arginine 198, aspartate 224, and 228 to 232 (DTAGT) each bind D-ribose 5-phosphate.

Belongs to the ribose-phosphate pyrophosphokinase family. Class I subfamily. Homohexamer. The cofactor is Mg(2+).

It is found in the cytoplasm. It carries out the reaction D-ribose 5-phosphate + ATP = 5-phospho-alpha-D-ribose 1-diphosphate + AMP + H(+). The protein operates within metabolic intermediate biosynthesis; 5-phospho-alpha-D-ribose 1-diphosphate biosynthesis; 5-phospho-alpha-D-ribose 1-diphosphate from D-ribose 5-phosphate (route I): step 1/1. Its function is as follows. Involved in the biosynthesis of the central metabolite phospho-alpha-D-ribosyl-1-pyrophosphate (PRPP) via the transfer of pyrophosphoryl group from ATP to 1-hydroxyl of ribose-5-phosphate (Rib-5-P). The polypeptide is Ribose-phosphate pyrophosphokinase 1 (Streptococcus pneumoniae serotype 4 (strain ATCC BAA-334 / TIGR4)).